The chain runs to 626 residues: Janus kinase and microtubule-interacting protein 1 (626 aa).

Residues 1–25 are disordered; it reads MSKKGRSKGDKPEAETDSVQMANEE. The tract at residues 1–365 is mediates association with microtubules; the sequence is MSKKGRSKGD…KLKSLTRENV (365 aa). 2 coiled-coil regions span residues 13–255 and 284–413; these read EAET…EAER and ERDV…DDLS. The mediates interaction with TYK2 and GABBR1 stretch occupies residues 365–626; that stretch reads VEMKEKLSAQ…ILFEPKLKFM (262 aa). Serine 382 bears the Phosphoserine mark. Polar residues predominate over residues 452 to 461; the sequence is ETLSETSYNT. Residues 452–481 are disordered; the sequence is ETLSETSYNTDRTDRTPATPEEDLDETTTR. Threonine 470 bears the Phosphothreonine mark. Residues 490 to 604 are a coiled coil; it reads QLTREYQALQ…EFRVLELEVR (115 aa).

It belongs to the JAKMIP family. Homodimer. Interacts with JAK1 and TYK2. Forms a complex with GABBR1 and KIF5B/kinesin-1. In terms of processing, phosphorylated.

The protein localises to the cytoplasm. It is found in the cytoskeleton. Its subcellular location is the membrane. In terms of biological role, associates with microtubules and may play a role in the microtubule-dependent transport of the GABA-B receptor. May play a role in JAK1 signaling and regulate microtubule cytoskeleton rearrangements. In Mus musculus (Mouse), this protein is Janus kinase and microtubule-interacting protein 1 (Jakmip1).